The primary structure comprises 341 residues: Methionine import ATP-binding protein MetN (341 aa).

The ABC transporter domain maps to 2–241; the sequence is IELNQIVKRY…PQHDVTKRFV (240 aa). 38–45 lines the ATP pocket; the sequence is GFSGAGKS.

This sequence belongs to the ABC transporter superfamily. Methionine importer (TC 3.A.1.24) family. The complex is composed of two ATP-binding proteins (MetN), two transmembrane proteins (MetI) and a solute-binding protein (MetQ).

The protein localises to the cell membrane. It catalyses the reaction L-methionine(out) + ATP + H2O = L-methionine(in) + ADP + phosphate + H(+). The catalysed reaction is D-methionine(out) + ATP + H2O = D-methionine(in) + ADP + phosphate + H(+). Its function is as follows. Part of the ABC transporter complex MetNIQ involved in methionine import. Responsible for energy coupling to the transport system. The sequence is that of Methionine import ATP-binding protein MetN from Staphylococcus saprophyticus subsp. saprophyticus (strain ATCC 15305 / DSM 20229 / NCIMB 8711 / NCTC 7292 / S-41).